A 574-amino-acid chain; its full sequence is Septation ring formation regulator EzrA (574 aa).

Over 1–7 (MSSGIVL) the chain is Extracellular. The helical transmembrane segment at 8 to 26 (LIVAIVLVVIIAYLIAIII) threads the bilayer. At 27–574 (RKRNDSLITK…YEKTRETIRF (548 aa)) the chain is on the cytoplasmic side. Coiled-coil stretches lie at residues 102–141 (NFIR…EEKN), 255–368 (KNIE…KDVL), and 409–495 (LKNI…EETA).

The protein belongs to the EzrA family.

It is found in the cell membrane. Functionally, negative regulator of FtsZ ring formation; modulates the frequency and position of FtsZ ring formation. Inhibits FtsZ ring formation at polar sites. Interacts either with FtsZ or with one of its binding partners to promote depolymerization. The protein is Septation ring formation regulator EzrA of Streptococcus mutans serotype c (strain ATCC 700610 / UA159).